A 288-amino-acid polypeptide reads, in one-letter code: Diaminopimelate epimerase (288 aa).

Positions 14 and 67 each coordinate substrate. The Proton donor role is filled by Cys-76. Substrate-binding positions include 77–78 (GN), Asn-166, Asn-199, and 217–218 (ER). Cys-226 acts as the Proton acceptor in catalysis. 227–228 (GT) is a substrate binding site.

Belongs to the diaminopimelate epimerase family. In terms of assembly, homodimer.

The protein localises to the cytoplasm. It catalyses the reaction (2S,6S)-2,6-diaminopimelate = meso-2,6-diaminopimelate. The protein operates within amino-acid biosynthesis; L-lysine biosynthesis via DAP pathway; DL-2,6-diaminopimelate from LL-2,6-diaminopimelate: step 1/1. Catalyzes the stereoinversion of LL-2,6-diaminopimelate (L,L-DAP) to meso-diaminopimelate (meso-DAP), a precursor of L-lysine and an essential component of the bacterial peptidoglycan. The polypeptide is Diaminopimelate epimerase (Bacillus cereus (strain B4264)).